We begin with the raw amino-acid sequence, 113 residues long: MGNKFRGGMPGMGNMGNMMKQMQKMQRQMEETQKRLEETEVTATSGGGAIEVVANGKKEIVSIKIDEDLVKDGDVEMLQDMVMVAVNDAIKKVLDMSESELGKITGGINIPGF.

A disordered region spans residues 1–44 (MGNKFRGGMPGMGNMGNMMKQMQKMQRQMEETQKRLEETEVTAT). Residues 15–26 (MGNMMKQMQKMQ) are compositionally biased toward low complexity. The span at 27–38 (RQMEETQKRLEE) shows a compositional bias: basic and acidic residues.

The protein belongs to the YbaB/EbfC family. Homodimer.

The protein localises to the cytoplasm. Its subcellular location is the nucleoid. Functionally, binds to DNA and alters its conformation. May be involved in regulation of gene expression, nucleoid organization and DNA protection. The sequence is that of Nucleoid-associated protein FMG_0513 from Finegoldia magna (strain ATCC 29328 / DSM 20472 / WAL 2508) (Peptostreptococcus magnus).